A 365-amino-acid polypeptide reads, in one-letter code: MSHNTFGHLFRVTTWGESHGPALGCVVDGAPPRLPLKAEDIQQWLDRRKPGQSRFTTQRREPDAVKILSGTFVEDGIEMTTGTPISLMIENVDQRSKDYGDIVEKFRPGHADLTYFLKYGIRDYRGGGRSSARETAARVAAGAVARAMLPEMMIRGALVQMGPHKIDRANWDWNEVGNNPFWCPDAKAAAEWEIYLDSVRKAGSSCGAVIEIVASGVPAGLGSPIYGKLDAELASALMSINAVKGVEIGDGFGAAALSGEENADEMQSGPHGIEFSSNHAGGVLGGISTGQDVVARFAVKPTSSILSPRKTVTKGGDDTEIVTKGRHDPCVGIRAVPVGEAMMACVLADQLLRHRAQMGGSGRNE.

NADP(+) is bound by residues Arg48 and Arg54. Residues 129–131 (RSS), 241–242 (NA), Gly285, 300–304 (KPTSS), and Arg326 each bind FMN.

The protein belongs to the chorismate synthase family. Homotetramer. Requires FMNH2 as cofactor.

The enzyme catalyses 5-O-(1-carboxyvinyl)-3-phosphoshikimate = chorismate + phosphate. It participates in metabolic intermediate biosynthesis; chorismate biosynthesis; chorismate from D-erythrose 4-phosphate and phosphoenolpyruvate: step 7/7. Its function is as follows. Catalyzes the anti-1,4-elimination of the C-3 phosphate and the C-6 proR hydrogen from 5-enolpyruvylshikimate-3-phosphate (EPSP) to yield chorismate, which is the branch point compound that serves as the starting substrate for the three terminal pathways of aromatic amino acid biosynthesis. This reaction introduces a second double bond into the aromatic ring system. The chain is Chorismate synthase from Parvibaculum lavamentivorans (strain DS-1 / DSM 13023 / NCIMB 13966).